A 103-amino-acid polypeptide reads, in one-letter code: UPF0473 protein LVIS_1220 (103 aa).

This sequence belongs to the UPF0473 family.

This Levilactobacillus brevis (strain ATCC 367 / BCRC 12310 / CIP 105137 / JCM 1170 / LMG 11437 / NCIMB 947 / NCTC 947) (Lactobacillus brevis) protein is UPF0473 protein LVIS_1220.